The primary structure comprises 207 residues: Phosphoenolpyruvate guanylyltransferase (207 aa).

Phosphoenolpyruvate-binding residues include threonine 137, glycine 153, and serine 156.

This sequence belongs to the CofC family.

It catalyses the reaction phosphoenolpyruvate + GTP + H(+) = enolpyruvoyl-2-diphospho-5'-guanosine + diphosphate. Its pathway is cofactor biosynthesis; coenzyme F420 biosynthesis. Functionally, guanylyltransferase that catalyzes the activation of phosphoenolpyruvate (PEP) as enolpyruvoyl-2-diphospho-5'-guanosine, via the condensation of PEP with GTP. It is involved in the biosynthesis of coenzyme F420, a hydride carrier cofactor. This Sphaerobacter thermophilus (strain ATCC 49802 / DSM 20745 / KCCM 41009 / NCIMB 13125 / S 6022) protein is Phosphoenolpyruvate guanylyltransferase.